The following is a 247-amino-acid chain: Proteasome subunit alpha type-7-B (247 aa).

This sequence belongs to the peptidase T1A family. As to quaternary structure, the 26S proteasome consists of a 20S proteasome core and two 19S regulatory subunits. The 20S proteasome core is composed of 28 subunits that are arranged in four stacked rings, resulting in a barrel-shaped structure. The two end rings are each formed by seven alpha subunits, and the two central rings are each formed by seven beta subunits. The catalytic chamber with the active sites is on the inside of the barrel. In terms of processing, phosphorylated in G2 phase.

Its subcellular location is the cytoplasm. The protein resides in the nucleus. In terms of biological role, the proteasome is a multicatalytic proteinase complex which is characterized by its ability to cleave peptides with Arg, Phe, Tyr, Leu, and Glu adjacent to the leaving group at neutral or slightly basic pH. The proteasome has an ATP-dependent proteolytic activity. This Xenopus laevis (African clawed frog) protein is Proteasome subunit alpha type-7-B (psma7-b).